The following is an 850-amino-acid chain: Protein SEY1 (850 aa).

Residues 1–27 are disordered; that stretch reads MSDLPPPDLGSEEISVSPTSSSSSFVP. Over 1-741 the chain is Cytoplasmic; it reads MSDLPPPDLG…KRALIQHVTH (741 aa). Residues 12–27 are compositionally biased toward low complexity; the sequence is EEISVSPTSSSSSFVP. The GB1/RHD3-type G domain maps to 64–297; sequence NNNYHIVSVF…NEDFLFKKYY (234 aa). 74–81 serves as a coordination point for GTP; that stretch reads GSQSTGKS. A helical membrane pass occupies residues 742-762; the sequence is IPYYIYIVILVLGWNEFMAVL. The Lumenal portion of the chain corresponds to 763–765; sequence RNP. A helical transmembrane segment spans residues 766–786; it reads FFFTLLLMLGAGTYVLYHLNL. The Cytoplasmic portion of the chain corresponds to 787 to 850; that stretch reads LKPAMVVVQR…SDLTPPGEGS (64 aa). The tract at residues 816 to 850 is disordered; it reads QPQEHAKRLSKMAGITEDKPEEIEMSDLTPPGEGS.

The protein belongs to the TRAFAC class dynamin-like GTPase superfamily. GB1/RHD3 GTPase family. RHD3 subfamily.

The protein resides in the endoplasmic reticulum membrane. Cooperates with the reticulon proteins and tubule-shaping DP1 family proteins to generate and maintain the structure of the tubular endoplasmic reticulum network. Has GTPase activity, which is required for its function in ER organization. This Meyerozyma guilliermondii (strain ATCC 6260 / CBS 566 / DSM 6381 / JCM 1539 / NBRC 10279 / NRRL Y-324) (Yeast) protein is Protein SEY1.